A 372-amino-acid chain; its full sequence is Glutamate 5-kinase (372 aa).

Residue Lys-9 participates in ATP binding. The substrate site is built by Ser-49, Asp-136, and Asn-148. ATP is bound by residues 168–169 and 210–216; these read TD and TGGMKSK. In terms of domain architecture, PUA spans 276–353; it reads AGSIEIDSGA…EEALSLTKRS (78 aa).

This sequence belongs to the glutamate 5-kinase family.

Its subcellular location is the cytoplasm. The enzyme catalyses L-glutamate + ATP = L-glutamyl 5-phosphate + ADP. It functions in the pathway amino-acid biosynthesis; L-proline biosynthesis; L-glutamate 5-semialdehyde from L-glutamate: step 1/2. Functionally, catalyzes the transfer of a phosphate group to glutamate to form L-glutamate 5-phosphate. The sequence is that of Glutamate 5-kinase from Shouchella clausii (strain KSM-K16) (Alkalihalobacillus clausii).